A 114-amino-acid chain; its full sequence is Large ribosomal subunit protein bL19 (114 aa).

The protein belongs to the bacterial ribosomal protein bL19 family.

Its function is as follows. This protein is located at the 30S-50S ribosomal subunit interface and may play a role in the structure and function of the aminoacyl-tRNA binding site. The sequence is that of Large ribosomal subunit protein bL19 from Lactococcus lactis subsp. cremoris (strain MG1363).